Consider the following 180-residue polypeptide: Hypoxanthine-guanine phosphoribosyltransferase (180 aa).

The diphosphate site is built by Lys43 and Gly44. Glu99 and Asp100 together coordinate Mg(2+). The Proton acceptor role is filled by Asp103. GMP is bound by residues Lys131, 152–153 (FI), and Asp159. Diphosphate is bound at residue Arg165.

The protein belongs to the purine/pyrimidine phosphoribosyltransferase family. Mg(2+) serves as cofactor.

Its subcellular location is the cytoplasm. It carries out the reaction IMP + diphosphate = hypoxanthine + 5-phospho-alpha-D-ribose 1-diphosphate. The catalysed reaction is GMP + diphosphate = guanine + 5-phospho-alpha-D-ribose 1-diphosphate. The protein operates within purine metabolism; IMP biosynthesis via salvage pathway; IMP from hypoxanthine: step 1/1. It functions in the pathway purine metabolism; GMP biosynthesis via salvage pathway; GMP from guanine: step 1/1. In terms of biological role, purine salvage pathway enzyme that catalyzes the transfer of the ribosyl-5-phosphate group from 5-phospho-alpha-D-ribose 1-diphosphate (PRPP) to the N9 position of the 6-oxopurines hypoxanthine and guanine to form the corresponding ribonucleotides IMP (inosine 5'-monophosphate) and GMP (guanosine 5'-monophosphate), with the release of PPi. This is Hypoxanthine-guanine phosphoribosyltransferase (hpt) from Streptococcus pyogenes serotype M3 (strain ATCC BAA-595 / MGAS315).